The primary structure comprises 238 residues: MGRKWANIVAKKTAKDGANSKVYAKFGVEIYVAAKKGDPDPETNTALKFVIDRAKQAQVPKHVIDKAIDKAKGNTDETFTEGRYEGFGPNGSMLIVDTLTSNVNRTAANVRAAFGKNGGNMGASGSVSYLFDNKGVVVFAGDDADSIFELLLEADVDVDDVEAEEGTITVYTAPTDLHKAIVALRESGIEEFQVTELEMIPQSEVELSGDDLATFEKLVDVLEDDEDVQKVYTNVEGF.

It belongs to the TACO1 family. YeeN subfamily.

Its subcellular location is the cytoplasm. The chain is Probable transcriptional regulatory protein SGO_0454 from Streptococcus gordonii (strain Challis / ATCC 35105 / BCRC 15272 / CH1 / DL1 / V288).